A 145-amino-acid polypeptide reads, in one-letter code: Large-conductance mechanosensitive channel (145 aa).

A run of 2 helical transmembrane segments spans residues 30–50 (VAVVIGGAFTSIVNAFVAWLM) and 74–94 (GELVIAIINFLIIAFVIFLII).

It belongs to the MscL family. Homopentamer.

Its subcellular location is the cell inner membrane. Its function is as follows. Channel that opens in response to stretch forces in the membrane lipid bilayer. May participate in the regulation of osmotic pressure changes within the cell. This Synechocystis sp. (strain ATCC 27184 / PCC 6803 / Kazusa) protein is Large-conductance mechanosensitive channel.